Reading from the N-terminus, the 169-residue chain is CRISPR system Cmr subunit Cmr5 (169 aa).

This sequence belongs to the CRISPR system Cmr5 family. In terms of assembly, monomer in isolation. Part of the type III-B Cmr ribonucleoprotein (RNP) complex, an elongated RNP with Cmr2 and Cmr3 as the base, with Cmr4 and Cmr5 forming a helical core along the mature crRNA (39 or 45 nt in length), while the complex is capped by Cmr6 and Cmr1. The 5' end of the crRNA is bound to Cmr2 and Cmr3, while Cmr6 and a Cmr1 subunit (Cmr1-1 or Cmr1-2) cap the 3' end of the crRNA. The target RNA lies antiparallel to the crRNA, with its 5' end near Cmr1 and Cmr6 and its 3' end near Cmr2 and Cmr3; major target cleavage occurs nears the junction of Cmr1/Cmr6 and Cmr4/Cmr, with minor cleavage occurring at 6 nt intervals which coincide with the proposed spacing of Cmr4 subunits. Interacts with Cmr4. Interacts with Cmr2, Cmr4 and Cmr6.

The protein resides in the cytoplasm. Its function is as follows. CRISPR (clustered regularly interspaced short palindromic repeat), is an adaptive immune system that provides protection against mobile genetic elements (viruses, transposable elements and conjugative plasmids). CRISPR clusters contain sequences complementary to antecedent mobile elements and target invading nucleic acids. CRISPR clusters are transcribed and processed into CRISPR RNA (crRNA), formerly called psiRNA (prokaryotic silencing) in this organism. Part of the Cmr ribonucleoprotein complex which has divalent cation-dependent endoribonuclease activity specific for ssRNA complementary to the crRNA (target NRA), generating 5' hydroxy- and 3' phosphate or 2'-3' cyclic phosphate termini. Cmr4 is probably the subunit that cleaves target RNA. Cmr complex does not cleave ssDNA complementary to the crRNA. Cleavage of invading RNA is guided by the crRNA; substrate cleavage occurs a fixed distance (14 nt) from the 3' end of the crRNA. In vitro reconstitution shows Cmr1-2 and Cmr5 are not absolutely necessary for target cleavage. This Pyrococcus furiosus (strain ATCC 43587 / DSM 3638 / JCM 8422 / Vc1) protein is CRISPR system Cmr subunit Cmr5.